The chain runs to 289 residues: 4-hydroxy-tetrahydrodipicolinate synthase (289 aa).

Pyruvate is bound at residue Thr42. The active-site Proton donor/acceptor is the Tyr129. Lys157 acts as the Schiff-base intermediate with substrate in catalysis. Ile198 provides a ligand contact to pyruvate.

Belongs to the DapA family. Homotetramer; dimer of dimers.

The protein resides in the cytoplasm. It carries out the reaction L-aspartate 4-semialdehyde + pyruvate = (2S,4S)-4-hydroxy-2,3,4,5-tetrahydrodipicolinate + H2O + H(+). Its pathway is amino-acid biosynthesis; L-lysine biosynthesis via DAP pathway; (S)-tetrahydrodipicolinate from L-aspartate: step 3/4. Its function is as follows. Catalyzes the condensation of (S)-aspartate-beta-semialdehyde [(S)-ASA] and pyruvate to 4-hydroxy-tetrahydrodipicolinate (HTPA). This chain is 4-hydroxy-tetrahydrodipicolinate synthase, found in Chlamydia caviae (strain ATCC VR-813 / DSM 19441 / 03DC25 / GPIC) (Chlamydophila caviae).